Here is a 352-residue protein sequence, read N- to C-terminus: MLEQLAYLHGAPTARGILKAQAADFVVNEDLGFEPCGEGEHIFVRVRKTGENTAWVAGLLADAAGVNRSAVTWAGLKDRHAVTEQWFGIHLPGKAEPDLSVIESDSIQILQVKRHNKKLRVGYLKGNHFILRLTGLEQADGLESRLQAIAEQGVPNYYGEQRFGRGGNNLEAAKAMFAGKRIKDRNKRSLYLSAARSMLFNAIVSARIEQGLAHQLLAGDCVMLKGSHSIFSEEGVTPELAARLASGDVQLTAPQWGRGRLASQGAAAEFEQSVLAPYHDWCDGLEKAGLDQDRRPLLLKPQAMSWQLEGTVLILSFFLPAGAFATSVVRELMQAEEADHGFRNQSDENSGQ.

Asp-78 functions as the Nucleophile in the catalytic mechanism. Positions 153–299 (GVPNYYGEQR…LDQDRRPLLL (147 aa)) constitute a TRUD domain.

Belongs to the pseudouridine synthase TruD family.

The enzyme catalyses uridine(13) in tRNA = pseudouridine(13) in tRNA. Responsible for synthesis of pseudouridine from uracil-13 in transfer RNAs. This Aeromonas hydrophila subsp. hydrophila (strain ATCC 7966 / DSM 30187 / BCRC 13018 / CCUG 14551 / JCM 1027 / KCTC 2358 / NCIMB 9240 / NCTC 8049) protein is tRNA pseudouridine synthase D.